An 893-amino-acid chain; its full sequence is DNA gyrase subunit A (893 aa).

A Topo IIA-type catalytic domain is found at 35 to 501; that stretch reads LPDVRDGLKP…GLEDLEDEDL (467 aa). Y123 serves as the catalytic O-(5'-phospho-DNA)-tyrosine intermediate. The GyrA-box motif lies at 528–534; sequence QNRGGRG. The disordered stretch occupies residues 810 to 893; sequence VNEEDDNEEN…ASDNEEDSDE (84 aa). Acidic residues-rich tracts occupy residues 812 to 821 and 852 to 862; these read EEDDNEENAD and DAEMESVESPE. Residues 863–879 are compositionally biased toward basic and acidic residues; the sequence is NDDRIDIRQDFMDRVNE. Acidic residues predominate over residues 880–893; it reads DIESASDNEEDSDE.

The protein belongs to the type II topoisomerase GyrA/ParC subunit family. In terms of assembly, heterotetramer, composed of two GyrA and two GyrB chains. In the heterotetramer, GyrA contains the active site tyrosine that forms a transient covalent intermediate with DNA, while GyrB binds cofactors and catalyzes ATP hydrolysis.

The protein resides in the cytoplasm. It catalyses the reaction ATP-dependent breakage, passage and rejoining of double-stranded DNA.. A type II topoisomerase that negatively supercoils closed circular double-stranded (ds) DNA in an ATP-dependent manner to modulate DNA topology and maintain chromosomes in an underwound state. Negative supercoiling favors strand separation, and DNA replication, transcription, recombination and repair, all of which involve strand separation. Also able to catalyze the interconversion of other topological isomers of dsDNA rings, including catenanes and knotted rings. Type II topoisomerases break and join 2 DNA strands simultaneously in an ATP-dependent manner. The chain is DNA gyrase subunit A from Staphylococcus epidermidis (strain ATCC 12228 / FDA PCI 1200).